The sequence spans 147 residues: Protein LOL1 (147 aa).

Positions 1 to 38 are disordered; the sequence is MVASRAPRSESPWLKKPMHGVSGSTAMASTPWSSMPPS. The span at 22–38 shows a compositional bias: polar residues; it reads SGSTAMASTPWSSMPPS. Residues 47-77 form a putative zinc finger region; that stretch reads QLVCSGCRNLLMYPAGATSICCAVCGTVTAV.

It is found in the nucleus. Its function is as follows. Putative zinc finger that may be involved in programmed cell death and defense response. In Oryza sativa subsp. japonica (Rice), this protein is Protein LOL1 (LOL1).